The primary structure comprises 514 residues: ATP synthase subunit alpha (514 aa).

170–177 is an ATP binding site; sequence GDRQTGKT.

The protein belongs to the ATPase alpha/beta chains family. In terms of assembly, F-type ATPases have 2 components, CF(1) - the catalytic core - and CF(0) - the membrane proton channel. CF(1) has five subunits: alpha(3), beta(3), gamma(1), delta(1), epsilon(1). CF(0) has three main subunits: a(1), b(2) and c(9-12). The alpha and beta chains form an alternating ring which encloses part of the gamma chain. CF(1) is attached to CF(0) by a central stalk formed by the gamma and epsilon chains, while a peripheral stalk is formed by the delta and b chains.

It localises to the cell inner membrane. It carries out the reaction ATP + H2O + 4 H(+)(in) = ADP + phosphate + 5 H(+)(out). Functionally, produces ATP from ADP in the presence of a proton gradient across the membrane. The alpha chain is a regulatory subunit. In Psychrobacter cryohalolentis (strain ATCC BAA-1226 / DSM 17306 / VKM B-2378 / K5), this protein is ATP synthase subunit alpha.